The primary structure comprises 550 residues: Protein UshA (550 aa).

A signal peptide spans 1 to 25 (MKLLQRGVALALLTTFTLASETALA). The Zn(2+) site is built by aspartate 41, histidine 43, aspartate 84, asparagine 116, histidine 217, histidine 252, and glutamine 254. A disulfide bridge links cysteine 258 with cysteine 275. Substrate-binding positions include 375–379 (RDKVR) and 498–504 (FNATGGD).

Belongs to the 5'-nucleotidase family. As to quaternary structure, monomer. It depends on Zn(2+) as a cofactor.

It is found in the periplasm. The catalysed reaction is UDP-sugar + H2O = UMP + alpha-D-aldose 1-phosphate.. The enzyme catalyses a ribonucleoside 5'-phosphate + H2O = a ribonucleoside + phosphate. Its activity is regulated as follows. The activity of this protein is inhibited by an intracellular protein inhibitor. In terms of biological role, degradation of external UDP-glucose to uridine monophosphate and glucose-1-phosphate, which can then be used by the cell. The polypeptide is Protein UshA (ushA) (Escherichia coli (strain K12)).